The primary structure comprises 87 residues: Phosphoribosyl-ATP pyrophosphatase (87 aa).

The protein belongs to the PRA-PH family.

Its subcellular location is the cytoplasm. The enzyme catalyses 1-(5-phospho-beta-D-ribosyl)-ATP + H2O = 1-(5-phospho-beta-D-ribosyl)-5'-AMP + diphosphate + H(+). The protein operates within amino-acid biosynthesis; L-histidine biosynthesis; L-histidine from 5-phospho-alpha-D-ribose 1-diphosphate: step 2/9. The protein is Phosphoribosyl-ATP pyrophosphatase of Nocardia farcinica (strain IFM 10152).